We begin with the raw amino-acid sequence, 227 residues long: Transmembrane emp24 domain-containing protein 1 (227 aa).

The first 24 residues, 1-24, serve as a signal peptide directing secretion; sequence MMAAGAAVALALWLLLPAVGVGEA. The Extracellular portion of the chain corresponds to 25 to 194; that stretch reads GPPPIQDGEF…LQEDNLERVN (170 aa). The 83-residue stretch at 43–125 folds into the GOLD domain; that stretch reads KQCFYQSAPA…EKLVFFELIF (83 aa). The stretch at 145–170 forms a coiled coil; it reads EMLDVKMEDIKESIETMRTRLERSIQ. The chain crosses the membrane as a helical span at residues 195–215; sequence FWSAANVAVLLLVAVLQVCTL. At 216 to 227 the chain is on the cytoplasmic side; the sequence is KRFFHDKRPVPT. The short motif at 218 to 219 is the COPII vesicle coat-binding element; sequence FF. The COPI vesicle coat-binding signature appears at 218–227; that stretch reads FFHDKRPVPT.

Belongs to the EMP24/GP25L family. Homodimer in endoplasmic reticulum, endoplasmic reticulum-Golgi intermediate compartment and cis-Golgi network. Interacts with IL1RL1. Interacts with RNF26; this interaction is important to modulate innate immune signaling through the cGAS-STING pathway. In terms of tissue distribution, widely expressed.

Its subcellular location is the cell membrane. It is found in the endoplasmic reticulum membrane. The protein resides in the golgi apparatus. The protein localises to the cis-Golgi network membrane. It localises to the endoplasmic reticulum-Golgi intermediate compartment membrane. Functionally, potential role in vesicular protein trafficking, mainly in the early secretory pathway. May act as a cargo receptor at the lumenal side for incorporation of secretory cargo molecules into transport vesicles and may be involved in vesicle coat formation at the cytoplasmic side. Plays a positive role in IL-33-mediated IL-8 and IL-6 production by interacting with interleukin-33 receptor IL1RL1. Plays also a role in the modulation of innate immune signaling through the cGAS-STING pathway by interacting with RNF26. The sequence is that of Transmembrane emp24 domain-containing protein 1 (Tmed1) from Mus musculus (Mouse).